The primary structure comprises 67 residues: MAVPKRKMSRANTRARRAQWKATAPNLVKTIENGQVTYSLPHQAKVVTDSAGTALFLEYKGRKVADA.

Residues 1–19 (MAVPKRKMSRANTRARRAQ) show a composition bias toward basic residues. A disordered region spans residues 1-20 (MAVPKRKMSRANTRARRAQW).

It belongs to the bacterial ribosomal protein bL32 family.

This is Large ribosomal subunit protein bL32 from Paenarthrobacter aurescens (strain TC1).